The primary structure comprises 230 residues: E3 ubiquitin-protein ligase RNF114 (230 aa).

An RING-type zinc finger spans residues 31–70 (CPVCLEVYEKPVQVPCGHVFCSACLQECLKPKKPVCGVCR). Positions 93 and 96 each coordinate Zn(2+). The segment at 93-112 (CHGCRKNFFLSKIRAHVATC) adopts a C2HC RNF-type zinc-finger fold. At K104 the chain carries N6-acetyllysine. The Zn(2+) site is built by H108 and C112. An N6-acetyllysine modification is found at K114.

As to quaternary structure, interacts with XAF1, the interaction increases XAF1 stability and proapoptotic effects, and may regulate IFN signaling. Post-translationally, autoubiquitinated. Polyubiquitinated in the presence of E2 enzymes UBE2D1, UBE2D2 and UBE2D3, but only monoubiquitinated in the presence of UBE2E1.

It localises to the cytoplasm. Its subcellular location is the nucleus. The catalysed reaction is S-ubiquitinyl-[E2 ubiquitin-conjugating enzyme]-L-cysteine + [acceptor protein]-L-lysine = [E2 ubiquitin-conjugating enzyme]-L-cysteine + N(6)-ubiquitinyl-[acceptor protein]-L-lysine.. It participates in protein modification; protein ubiquitination. Its function is as follows. E3 ubiquitin-protein ligase that promotes the ubiquitination of various substrates. In turn, participates in the regulation of many biological processes including cell cycle, apoptosis, osteoclastogenesis as well as innate or adaptive immunity. Acts as negative regulator of NF-kappa-B-dependent transcription by promoting the ubiquitination and stabilization of the NF-kappa-B inhibitor TNFAIP3. May promote the ubiquitination of TRAF6 as well. Also acts as a negative regulator of T-cell activation. Inhibits cellular dsRNA responses and interferon production by targeting MAVS component for proteasomal degradation. Ubiquitinates the CDK inhibitor CDKN1A leading to its degradationand probably also CDKN1B and CDKN1C. This activity stimulates cell cycle G1-to-S phase transition and suppresses cellular senescence. May play a role in spermatogenesis. This chain is E3 ubiquitin-protein ligase RNF114 (RNF114), found in Bos taurus (Bovine).